Consider the following 86-residue polypeptide: Small ribosomal subunit protein uS17 (86 aa).

It belongs to the universal ribosomal protein uS17 family. Part of the 30S ribosomal subunit.

In terms of biological role, one of the primary rRNA binding proteins, it binds specifically to the 5'-end of 16S ribosomal RNA. This chain is Small ribosomal subunit protein uS17, found in Streptococcus equi subsp. equi (strain 4047).